The following is a 106-amino-acid chain: Iron-sulfur cluster assembly protein CyaY (106 aa).

This sequence belongs to the frataxin family.

Functionally, involved in iron-sulfur (Fe-S) cluster assembly. May act as a regulator of Fe-S biogenesis. This chain is Iron-sulfur cluster assembly protein CyaY, found in Salmonella paratyphi B (strain ATCC BAA-1250 / SPB7).